Consider the following 582-residue polypeptide: MKMHFFILLVITSWLSEKITSLPPDSRVFDRHGFPDNFVFGTAASAFQYEGATSEGGKSPSIWDYFSHTFPERTRMQNADVAVDFYHRYKDDIKLMKELNMDAFRFSISWARLIPSGKVKDGVNKEGVEFYKALIDELVANGIEPSMTLYHWDHPQSLEDEYGGFLSPQIVEDFRDFSRVCFEEFGDKVKMWTTINEPYVITVAGYDTGNKAVGRCSKWVNSKCQGGDSGTEPYIASHHLLLAHAAAVQEFRKCNKTQDGQIGIVLSPLWFEPYDSASPADNEAVKRALATELDWHLDPVIHGDYPEMMKKLAGNRLPSFTPEQSKMLKNSSDFIGINYYTARYVAHIPQADPARPRFVTDHQLQWRVTNHSNHQFGPGEDRGILQSHPEGLRKVLNYIKDKYNNPIVYIKENGINDYDDGTKSREEILNDTFRISYHEDHLQQLQKAIIEDGCDVRGYYVWSLLDNFEWEHGYSTRFGVYYVDYDNDLTRIPKDSVNWFKQFLDVKNKEIWDVSHKERYNKTFDDVESFEASVGSILYLMTNNISRREEEERDQCAFGNLNDQSGLLLESYNSFGFLENVW.

An N-terminal signal peptide occupies residues 1 to 21 (MKMHFFILLVITSWLSEKITS). Residues Gln-48, His-151, and 196-197 (NE) contribute to the a beta-D-glucoside site. Glu-197 (proton donor) is an active-site residue. Cys-216 and Cys-224 are joined by a disulfide. Asn-255 and Asn-330 each carry an N-linked (GlcNAc...) asparagine glycan. A beta-D-glucoside is bound at residue Tyr-340. Asn-370 carries N-linked (GlcNAc...) asparagine glycosylation. An a beta-D-glucoside-binding site is contributed by Glu-412. Glu-412 acts as the Nucleophile in catalysis. Asn-430 carries N-linked (GlcNAc...) asparagine glycosylation. A beta-D-glucoside contacts are provided by residues Trp-462, 469–470 (EW), and Phe-478. Residues Asn-521 and Asn-544 are each glycosylated (N-linked (GlcNAc...) asparagine).

This sequence belongs to the glycosyl hydrolase 1 family.

It carries out the reaction Hydrolysis of terminal, non-reducing beta-D-glucosyl residues with release of beta-D-glucose.. The polypeptide is Beta-glucosidase 28 (Arabidopsis thaliana (Mouse-ear cress)).